We begin with the raw amino-acid sequence, 278 residues long: Phosphate import ATP-binding protein PstB (278 aa).

In terms of domain architecture, ABC transporter spans 32–273; sequence YETRDLNLWY…PSDKRTEDYI (242 aa). 64 to 71 lines the ATP pocket; that stretch reads GPSGCGKS.

This sequence belongs to the ABC transporter superfamily. Phosphate importer (TC 3.A.1.7) family. In terms of assembly, the complex is composed of two ATP-binding proteins (PstB), two transmembrane proteins (PstC and PstA) and a solute-binding protein (PstS).

The protein resides in the cell membrane. The catalysed reaction is phosphate(out) + ATP + H2O = ADP + 2 phosphate(in) + H(+). In terms of biological role, part of the ABC transporter complex PstSACB involved in phosphate import. Responsible for energy coupling to the transport system. The sequence is that of Phosphate import ATP-binding protein PstB from Halalkalibacterium halodurans (strain ATCC BAA-125 / DSM 18197 / FERM 7344 / JCM 9153 / C-125) (Bacillus halodurans).